A 196-amino-acid chain; its full sequence is Heat shock protein beta-8 (196 aa).

The segment at M1 to F35 is disordered. A phosphoserine mark is found at S24 and S57. The residue at position 63 (T63) is a Phosphothreonine. 2 positions are modified to asymmetric dimethylarginine: R71 and R78. The region spanning T74 to E185 is the sHSP domain. Position 87 is a phosphoserine (S87). A disordered region spans residues P176 to T196. Residues G178–T196 are compositionally biased toward polar residues.

Belongs to the small heat shock protein (HSP20) family. As to quaternary structure, monomer. Forms a ternary complex with BAG3 and HSPA1A. Component of the chaperone-assisted selective autophagy (CASA) complex consisting of BAG3, HSPA8/HSC70, HSPB8 and STUB1/CHIP. Interacts with HSPB1. Interacts with DNAJB6. Interacts with BAG3. In terms of processing, phosphorylated.

The protein resides in the cytoplasm. It is found in the nucleus. Involved in the chaperone-assisted selective autophagy (CASA), a crucial process for protein quality control, particularly in mechanical strained cells and tissues such as muscle. Displays temperature-dependent chaperone activity. The protein is Heat shock protein beta-8 (HSPB8) of Canis lupus familiaris (Dog).